Reading from the N-terminus, the 308-residue chain is MNEEKNYELWLDNYFFKPNFWQKCLAFILLPLSVLYAFFAILNTFFRKKIVFKKPVISVGNLSFGGNGKTPLCKAIAREFDGVFIVLRGYKRKSKGLFVVKNQNEILCTLTQSGDEAMEYAFEENIKGVIVSEDRVKGIEKAFELGAKIVVLDDAFSKFHIKKFDILLESKIKPYFNFTLPSGAYRLPKFYEKRADFIALEGRDFVRYSFVKENPKAVLVTAIAKPFRLYEHFIKARACYFFKDHYEFKKEELENLLKKHNCDTLMLTFKDFVKVKDFGFKCQIIELNIELKDSLREKIKTYIKEFEQ.

63–70 provides a ligand contact to ATP; the sequence is SFGGNGKT.

Belongs to the LpxK family.

The catalysed reaction is a lipid A disaccharide + ATP = a lipid IVA + ADP + H(+). It participates in glycolipid biosynthesis; lipid IV(A) biosynthesis; lipid IV(A) from (3R)-3-hydroxytetradecanoyl-[acyl-carrier-protein] and UDP-N-acetyl-alpha-D-glucosamine: step 6/6. Functionally, transfers the gamma-phosphate of ATP to the 4'-position of a tetraacyldisaccharide 1-phosphate intermediate (termed DS-1-P) to form tetraacyldisaccharide 1,4'-bis-phosphate (lipid IVA). The polypeptide is Tetraacyldisaccharide 4'-kinase (Campylobacter jejuni subsp. jejuni serotype O:2 (strain ATCC 700819 / NCTC 11168)).